The following is a 1584-amino-acid chain: Sterile alpha motif domain-containing protein 9-like (1584 aa).

In terms of domain architecture, SAM spans Trp-14–Ser-79. Residues Asn-76–Asp-122 form a disordered region. The span at Pro-80–Glu-112 shows a compositional bias: basic and acidic residues.

As to quaternary structure, interacts with EEA1. Widely expressed in adult and fetal tissues. Expressed in the cerebellum. Variable expression in tumors. Down-regulated in breast cancer.

It localises to the early endosome. The protein localises to the mitochondrion. Functionally, may be involved in endosome fusion. Mediates down-regulation of growth factor signaling via internalization of growth factor receptors. This chain is Sterile alpha motif domain-containing protein 9-like (SAMD9L), found in Homo sapiens (Human).